The chain runs to 185 residues: Ribosome-recycling factor (185 aa).

This sequence belongs to the RRF family.

Its subcellular location is the cytoplasm. Functionally, responsible for the release of ribosomes from messenger RNA at the termination of protein biosynthesis. May increase the efficiency of translation by recycling ribosomes from one round of translation to another. The sequence is that of Ribosome-recycling factor from Clostridium acetobutylicum (strain ATCC 824 / DSM 792 / JCM 1419 / IAM 19013 / LMG 5710 / NBRC 13948 / NRRL B-527 / VKM B-1787 / 2291 / W).